The chain runs to 325 residues: UPF0324 membrane protein Bd1437 (325 aa).

A run of 8 helical transmembrane segments spans residues 21–43 (IAAL…GIVL), 58–80 (YTHH…MVVG), 87–105 (IGYT…MLIG), 115–137 (STLI…APTI), 144–166 (VSVA…PWIG), 211–230 (ARAL…YFRG), 243–260 (PWFI…TWIP), and 302–324 (LQGV…IGWI).

The protein belongs to the UPF0324 family.

The protein resides in the cell membrane. This Bdellovibrio bacteriovorus (strain ATCC 15356 / DSM 50701 / NCIMB 9529 / HD100) protein is UPF0324 membrane protein Bd1437.